Consider the following 387-residue polypeptide: Phosphoglycerate kinase (387 aa).

Residues 21–23 (DLN), R36, and 59–62 (HLGR) each bind substrate. K84 is subject to N6-acetyllysine. Substrate is bound by residues R113 and R146. Residues K197, E314, and 340–343 (GGDT) each bind ATP.

This sequence belongs to the phosphoglycerate kinase family. As to quaternary structure, monomer.

The protein localises to the cytoplasm. It catalyses the reaction (2R)-3-phosphoglycerate + ATP = (2R)-3-phospho-glyceroyl phosphate + ADP. Its pathway is carbohydrate degradation; glycolysis; pyruvate from D-glyceraldehyde 3-phosphate: step 2/5. In Shigella sonnei (strain Ss046), this protein is Phosphoglycerate kinase.